The sequence spans 189 residues: Development-specific protein LVN1.2 (189 aa).

In terms of tissue distribution, endoderm cells.

The polypeptide is Development-specific protein LVN1.2 (Lytechinus variegatus (Green sea urchin)).